We begin with the raw amino-acid sequence, 171 residues long: 3-hydroxydecanoyl-[acyl-carrier-protein] dehydratase (171 aa).

The active site involves His71.

It belongs to the thioester dehydratase family. FabA subfamily. As to quaternary structure, homodimer.

It is found in the cytoplasm. The catalysed reaction is a (3R)-hydroxyacyl-[ACP] = a (2E)-enoyl-[ACP] + H2O. It catalyses the reaction (3R)-hydroxydecanoyl-[ACP] = (2E)-decenoyl-[ACP] + H2O. It carries out the reaction (2E)-decenoyl-[ACP] = (3Z)-decenoyl-[ACP]. It participates in lipid metabolism; fatty acid biosynthesis. Functionally, necessary for the introduction of cis unsaturation into fatty acids. Catalyzes the dehydration of (3R)-3-hydroxydecanoyl-ACP to E-(2)-decenoyl-ACP and then its isomerization to Z-(3)-decenoyl-ACP. Can catalyze the dehydratase reaction for beta-hydroxyacyl-ACPs with saturated chain lengths up to 16:0, being most active on intermediate chain length. In Sinorhizobium fredii (strain NBRC 101917 / NGR234), this protein is 3-hydroxydecanoyl-[acyl-carrier-protein] dehydratase.